Reading from the N-terminus, the 123-residue chain is Small ribosomal subunit protein uS12 (123 aa).

D89 bears the 3-methylthioaspartic acid mark.

The protein belongs to the universal ribosomal protein uS12 family. Part of the 30S ribosomal subunit. Contacts proteins S8 and S17. May interact with IF1 in the 30S initiation complex.

In terms of biological role, with S4 and S5 plays an important role in translational accuracy. Interacts with and stabilizes bases of the 16S rRNA that are involved in tRNA selection in the A site and with the mRNA backbone. Located at the interface of the 30S and 50S subunits, it traverses the body of the 30S subunit contacting proteins on the other side and probably holding the rRNA structure together. The combined cluster of proteins S8, S12 and S17 appears to hold together the shoulder and platform of the 30S subunit. This is Small ribosomal subunit protein uS12 from Rhodopseudomonas palustris (strain BisA53).